A 212-amino-acid chain; its full sequence is Translation initiation factor IF-3 (212 aa).

The interval 168-212 (MAPKAPASPKKDKADRPEGDAGDTDMAAPAPAPAAAPETESAPSA) is disordered. Basic and acidic residues predominate over residues 176 to 186 (PKKDKADRPEG). Over residues 194-212 (AAPAPAPAAAPETESAPSA) the composition is skewed to low complexity.

The protein belongs to the IF-3 family. Monomer.

The protein localises to the cytoplasm. IF-3 binds to the 30S ribosomal subunit and shifts the equilibrium between 70S ribosomes and their 50S and 30S subunits in favor of the free subunits, thus enhancing the availability of 30S subunits on which protein synthesis initiation begins. The protein is Translation initiation factor IF-3 of Deinococcus radiodurans (strain ATCC 13939 / DSM 20539 / JCM 16871 / CCUG 27074 / LMG 4051 / NBRC 15346 / NCIMB 9279 / VKM B-1422 / R1).